The sequence spans 272 residues: Transcription factor PU.1 (272 aa).

The tract at residues 126 to 165 is disordered; sequence SPAHQQSSDEEEGERQSPPLEVSDGEADGLEPGPGLLHGE. Residues Ser142 and Ser148 each carry the phosphoserine modification. Positions 155–165 are enriched in low complexity; the sequence is LEPGPGLLHGE. A DNA-binding region (ETS) is located at residues 172 to 255; it reads IRLYQFLLDL…VKKKLTYQFS (84 aa). 4 residues coordinate DNA: Lys219, Arg232, Arg235, and Lys245.

This sequence belongs to the ETS family. Binds DNA as a monomer. Can form homomers. Directly interacts with CEBPD/NF-IL6-beta; this interaction does not affect DNA-binding properties of each partner. Interacts with NONO/p54(nrb). Interacts with RUNX1/AML1. Interacts with GFI1; the interaction represses SPI1 transcriptional activity, hence blocks SPI1-induced macrophage differentiation of myeloid progenitor cells. Interacts with CEBPE. Interacts with IRF4/Pip and IRF8. Interacts with JUN. Interacts with RB1. Interacts with TBP. In terms of tissue distribution, expressed in spleen, thymus and bone-marrow macrophages.

The protein localises to the nucleus. With respect to regulation, transcriptional activity at macrophage-specific genes is inhibited by interaction with GFI1, which results in inhibition of SPI1-induced macrophage differentiation of myeloid progenitor cells, but not that of the granulocyte lineage. Its function is as follows. Pioneer transcription factor, which controls hematopoietic cell fate by decompacting stem cell heterochromatin and allowing other transcription factors to enter otherwise inaccessible genomic sites. Once in open chromatin, can directly control gene expression by binding genetic regulatory elements and can also more broadly influence transcription by recruiting transcription factors, such as interferon regulatory factors (IRFs), to otherwise inaccessible genomic regions. Transcriptionally activates genes important for myeloid and lymphoid lineages, such as CSF1R. Transcriptional activation from certain promoters, possibly containing low affinity binding sites, is achieved cooperatively with other transcription factors. FCER1A transactivation is achieved in cooperation with GATA1. May be particularly important for the pro- to pre-B cell transition. Binds (via the ETS domain) onto the purine-rich DNA core sequence 5'-GAGGAA-3', also known as the PU-box. In vitro can bind RNA and interfere with pre-mRNA splicing. The sequence is that of Transcription factor PU.1 (Spi1) from Mus musculus (Mouse).